Reading from the N-terminus, the 338-residue chain is Pyridoxal 5'-phosphate synthase subunit PdxS (338 aa).

Position 66 (D66) interacts with D-ribose 5-phosphate. K123 functions as the Schiff-base intermediate with D-ribose 5-phosphate in the catalytic mechanism. G195 is a D-ribose 5-phosphate binding site. K207 is a D-glyceraldehyde 3-phosphate binding site. D-ribose 5-phosphate is bound by residues G256 and 277 to 278 (GS).

It belongs to the PdxS/SNZ family. As to quaternary structure, in the presence of PdxT, forms a dodecamer of heterodimers.

It carries out the reaction aldehydo-D-ribose 5-phosphate + D-glyceraldehyde 3-phosphate + L-glutamine = pyridoxal 5'-phosphate + L-glutamate + phosphate + 3 H2O + H(+). It participates in cofactor biosynthesis; pyridoxal 5'-phosphate biosynthesis. Its function is as follows. Catalyzes the formation of pyridoxal 5'-phosphate from ribose 5-phosphate (RBP), glyceraldehyde 3-phosphate (G3P) and ammonia. The ammonia is provided by the PdxT subunit. Can also use ribulose 5-phosphate and dihydroxyacetone phosphate as substrates, resulting from enzyme-catalyzed isomerization of RBP and G3P, respectively. The sequence is that of Pyridoxal 5'-phosphate synthase subunit PdxS from Saccharolobus islandicus (strain L.S.2.15 / Lassen #1) (Sulfolobus islandicus).